We begin with the raw amino-acid sequence, 91 residues long: uncharacterized protein (91 aa).

This is an uncharacterized protein from Vaccinia virus (strain Copenhagen) (VACV).